The following is a 228-amino-acid chain: 3-dehydroquinate dehydratase (228 aa).

3-dehydroquinate contacts are provided by residues 30–32 (EWR) and Arg-62. Residue His-118 is the Proton donor/acceptor of the active site. Lys-143 acts as the Schiff-base intermediate with substrate in catalysis. 3-dehydroquinate is bound by residues Arg-186, Ser-205, and Gln-209.

Belongs to the type-I 3-dehydroquinase family. As to quaternary structure, homodimer.

The catalysed reaction is 3-dehydroquinate = 3-dehydroshikimate + H2O. The protein operates within metabolic intermediate biosynthesis; chorismate biosynthesis; chorismate from D-erythrose 4-phosphate and phosphoenolpyruvate: step 3/7. Functionally, involved in the third step of the chorismate pathway, which leads to the biosynthesis of aromatic amino acids. Catalyzes the cis-dehydration of 3-dehydroquinate (DHQ) and introduces the first double bond of the aromatic ring to yield 3-dehydroshikimate. The polypeptide is 3-dehydroquinate dehydratase (Streptococcus pyogenes serotype M12 (strain MGAS9429)).